A 216-amino-acid polypeptide reads, in one-letter code: Sarcospan (216 aa).

At 1–26 the chain is on the cytoplasmic side; it reads MGRKPSPRAQELPEEEARTCCGCRFP. A helical membrane pass occupies residues 27-47; the sequence is LLLALLQLALGIAVTVLGFLM. At 48–59 the chain is on the extracellular side; the sequence is ASISPSLLVRDT. Residues 60-80 traverse the membrane as a helical segment; the sequence is PFWAGSIVCVVAYLGLFMLCV. Over 81 to 95 the chain is Cytoplasmic; the sequence is SYQVDERTCVQFSMK. Residues 96 to 116 traverse the membrane as a helical segment; the sequence is VFYFLLSALGLMVCMLAVAFA. Topologically, residues 117 to 166 are extracellular; sequence AHHYSLLAQFTCETSLDSCQCKLPSSEPLSRAFVYRDVTDCTSVTGTFKL. Residues 167-187 form a helical membrane-spanning segment; sequence FLIIQMVLNLVCGLVCLLACF. Residues 188–216 lie on the Cytoplasmic side of the membrane; that stretch reads VMWKHRYQVFYVGVGLRSLMASDGQLPKA.

Its subcellular location is the cell membrane. The protein resides in the sarcolemma. The protein localises to the postsynaptic cell membrane. In terms of biological role, component of the dystrophin-glycoprotein complex (DGC), a complex that spans the muscle plasma membrane and forms a link between the F-actin cytoskeleton and the extracellular matrix. Preferentially associates with the sarcoglycan subcomplex of the DGC. This is Sarcospan (Sspn) from Mus musculus (Mouse).